The chain runs to 1292 residues: Putative late blight resistance protein homolog R1C-3 (1292 aa).

Coiled-coil stretches lie at residues 394–414 (DSLA…ESMQ) and 505–526 (RMNE…KLLN). Residues 505–792 (RMNEEIVGFE…SESFVKSCEG (288 aa)) enclose the NB-ARC domain. 538–545 (GMPGLGKT) contributes to the ATP binding site. 7 LRR repeats span residues 842-865 (AEEN…VYSH), 920-944 (FKFL…LFYL), 963-991 (LWNL…VWDM), 1066-1089 (PIRL…CISA), 1094-1113 (YLEL…TADH), 1114-1142 (LKHL…MFPQ), and 1163-1187 (FPNL…FMDI). Residues 1211 to 1278 (ETQVEDNQNT…KLRNVAYADE (68 aa)) enclose the HMA domain.

Belongs to the disease resistance NB-LRR family.

It is found in the cytoplasm. The protein localises to the membrane. In terms of biological role, confers resistance to late blight (Phytophthora infestans) races carrying the avirulence gene Avr1. Resistance proteins guard the plant against pathogens that contain an appropriate avirulence protein via an indirect interaction with this avirulence protein. That triggers a defense system including the hypersensitive response, which restricts the pathogen growth. The sequence is that of Putative late blight resistance protein homolog R1C-3 (R1C-3) from Solanum demissum (Wild potato).